Here is a 150-residue protein sequence, read N- to C-terminus: Large ribosomal subunit protein bL9 (150 aa).

This sequence belongs to the bacterial ribosomal protein bL9 family.

Binds to the 23S rRNA. This is Large ribosomal subunit protein bL9 from Neisseria gonorrhoeae (strain ATCC 700825 / FA 1090).